We begin with the raw amino-acid sequence, 82 residues long: Small ribosomal subunit protein bS16c (82 aa).

This sequence belongs to the bacterial ribosomal protein bS16 family.

It is found in the plastid. Its subcellular location is the chloroplast. This is Small ribosomal subunit protein bS16c from Pyropia yezoensis (Susabi-nori).